The primary structure comprises 289 residues: ATP synthase subunit a (289 aa).

The next 6 helical transmembrane spans lie at Ala43–Phe63, Val103–Leu123, Phe160–Ile180, Ile193–Ala213, Val232–Val252, and Ala259–Val279.

Belongs to the ATPase A chain family. F-type ATPases have 2 components, CF(1) - the catalytic core - and CF(0) - the membrane proton channel. CF(1) has five subunits: alpha(3), beta(3), gamma(1), delta(1), epsilon(1). CF(0) has three main subunits: a(1), b(2) and c(9-12). The alpha and beta chains form an alternating ring which encloses part of the gamma chain. CF(1) is attached to CF(0) by a central stalk formed by the gamma and epsilon chains, while a peripheral stalk is formed by the delta and b chains.

Its subcellular location is the cell inner membrane. Its function is as follows. Key component of the proton channel; it plays a direct role in the translocation of protons across the membrane. In Pseudomonas putida (strain ATCC 700007 / DSM 6899 / JCM 31910 / BCRC 17059 / LMG 24140 / F1), this protein is ATP synthase subunit a.